Reading from the N-terminus, the 418-residue chain is Gamma-glutamyl phosphate reductase (418 aa).

The protein belongs to the gamma-glutamyl phosphate reductase family.

The protein localises to the cytoplasm. The catalysed reaction is L-glutamate 5-semialdehyde + phosphate + NADP(+) = L-glutamyl 5-phosphate + NADPH + H(+). It functions in the pathway amino-acid biosynthesis; L-proline biosynthesis; L-glutamate 5-semialdehyde from L-glutamate: step 2/2. Its function is as follows. Catalyzes the NADPH-dependent reduction of L-glutamate 5-phosphate into L-glutamate 5-semialdehyde and phosphate. The product spontaneously undergoes cyclization to form 1-pyrroline-5-carboxylate. This Marinobacter nauticus (strain ATCC 700491 / DSM 11845 / VT8) (Marinobacter aquaeolei) protein is Gamma-glutamyl phosphate reductase.